We begin with the raw amino-acid sequence, 528 residues long: ATP synthase subunit alpha 1 (528 aa).

169–176 contributes to the ATP binding site; sequence GDRQTGKT.

The protein belongs to the ATPase alpha/beta chains family. F-type ATPases have 2 components, CF(1) - the catalytic core - and CF(0) - the membrane proton channel. CF(1) has five subunits: alpha(3), beta(3), gamma(1), delta(1), epsilon(1). CF(0) has three main subunits: a(1), b(2) and c(9-12). The alpha and beta chains form an alternating ring which encloses part of the gamma chain. CF(1) is attached to CF(0) by a central stalk formed by the gamma and epsilon chains, while a peripheral stalk is formed by the delta and b chains.

The protein localises to the cell membrane. The catalysed reaction is ATP + H2O + 4 H(+)(in) = ADP + phosphate + 5 H(+)(out). In terms of biological role, produces ATP from ADP in the presence of a proton gradient across the membrane. The alpha chain is a regulatory subunit. The sequence is that of ATP synthase subunit alpha 1 from Mycoplasmopsis pulmonis (strain UAB CTIP) (Mycoplasma pulmonis).